We begin with the raw amino-acid sequence, 429 residues long: Phosphomethylpyrimidine synthase (429 aa).

Residues N66, M95, Y124, H163, S185–G187, D226–R229, and E265 each bind substrate. Zn(2+) is bound at residue H269. Y292 contributes to the substrate binding site. H333 contacts Zn(2+). 3 residues coordinate [4Fe-4S] cluster: C409, C412, and C416.

It belongs to the ThiC family. [4Fe-4S] cluster is required as a cofactor.

The catalysed reaction is 5-amino-1-(5-phospho-beta-D-ribosyl)imidazole + S-adenosyl-L-methionine = 4-amino-2-methyl-5-(phosphooxymethyl)pyrimidine + CO + 5'-deoxyadenosine + formate + L-methionine + 3 H(+). It functions in the pathway cofactor biosynthesis; thiamine diphosphate biosynthesis. Functionally, catalyzes the synthesis of the hydroxymethylpyrimidine phosphate (HMP-P) moiety of thiamine from aminoimidazole ribotide (AIR) in a radical S-adenosyl-L-methionine (SAM)-dependent reaction. The protein is Phosphomethylpyrimidine synthase of Methanopyrus kandleri (strain AV19 / DSM 6324 / JCM 9639 / NBRC 100938).